A 957-amino-acid polypeptide reads, in one-letter code: Glycine dehydrogenase (decarboxylating) (957 aa).

The residue at position 708 (lysine 708) is an N6-(pyridoxal phosphate)lysine.

It belongs to the GcvP family. The glycine cleavage system is composed of four proteins: P, T, L and H. It depends on pyridoxal 5'-phosphate as a cofactor.

It catalyses the reaction N(6)-[(R)-lipoyl]-L-lysyl-[glycine-cleavage complex H protein] + glycine + H(+) = N(6)-[(R)-S(8)-aminomethyldihydrolipoyl]-L-lysyl-[glycine-cleavage complex H protein] + CO2. The glycine cleavage system catalyzes the degradation of glycine. The P protein binds the alpha-amino group of glycine through its pyridoxal phosphate cofactor; CO(2) is released and the remaining methylamine moiety is then transferred to the lipoamide cofactor of the H protein. The chain is Glycine dehydrogenase (decarboxylating) from Klebsiella pneumoniae subsp. pneumoniae (strain ATCC 700721 / MGH 78578).